Consider the following 206-residue polypeptide: Small ribosomal subunit protein uS4 (206 aa).

Residues 96–156 form the S4 RNA-binding domain; the sequence is GRLDNVVYRM…EKSKKQSRIK (61 aa).

This sequence belongs to the universal ribosomal protein uS4 family. In terms of assembly, part of the 30S ribosomal subunit. Contacts protein S5. The interaction surface between S4 and S5 is involved in control of translational fidelity.

One of the primary rRNA binding proteins, it binds directly to 16S rRNA where it nucleates assembly of the body of the 30S subunit. In terms of biological role, with S5 and S12 plays an important role in translational accuracy. The chain is Small ribosomal subunit protein uS4 from Photorhabdus laumondii subsp. laumondii (strain DSM 15139 / CIP 105565 / TT01) (Photorhabdus luminescens subsp. laumondii).